Consider the following 233-residue polypeptide: Large ribosomal subunit protein uL1 (233 aa).

The protein belongs to the universal ribosomal protein uL1 family. As to quaternary structure, part of the 50S ribosomal subunit.

Its function is as follows. Binds directly to 23S rRNA. The L1 stalk is quite mobile in the ribosome, and is involved in E site tRNA release. In terms of biological role, protein L1 is also a translational repressor protein, it controls the translation of the L11 operon by binding to its mRNA. The polypeptide is Large ribosomal subunit protein uL1 (Brucella anthropi (strain ATCC 49188 / DSM 6882 / CCUG 24695 / JCM 21032 / LMG 3331 / NBRC 15819 / NCTC 12168 / Alc 37) (Ochrobactrum anthropi)).